Here is a 258-residue protein sequence, read N- to C-terminus: Acetylglutamate kinase (258 aa).

Residues 41 to 42 (GG), Arg-63, and Asn-156 contribute to the substrate site.

This sequence belongs to the acetylglutamate kinase family. ArgB subfamily.

Its subcellular location is the cytoplasm. The catalysed reaction is N-acetyl-L-glutamate + ATP = N-acetyl-L-glutamyl 5-phosphate + ADP. It participates in amino-acid biosynthesis; L-arginine biosynthesis; N(2)-acetyl-L-ornithine from L-glutamate: step 2/4. Functionally, catalyzes the ATP-dependent phosphorylation of N-acetyl-L-glutamate. This is Acetylglutamate kinase from Bacillus amyloliquefaciens (Bacillus velezensis).